A 389-amino-acid chain; its full sequence is Phospholipid phosphatase-related protein type 2 (389 aa).

A run of 2 helical transmembrane segments spans residues I14–P34 and F66–V86. N102 carries N-linked (GlcNAc...) asparagine glycosylation. Helical transmembrane passes span A147–V167, S176–Y196, and V203–H223. S236 and S249 each carry phosphoserine. 2 disordered regions span residues S255–C280 and A295–L351. The segment covering S265–Q278 has biased composition (polar residues). Over residues T314–G339 the composition is skewed to pro residues.

This sequence belongs to the PA-phosphatase related phosphoesterase family.

Its subcellular location is the membrane. The polypeptide is Phospholipid phosphatase-related protein type 2 (Bos taurus (Bovine)).